Consider the following 317-residue polypeptide: Melanocyte-stimulating hormone receptor (317 aa).

The Extracellular segment spans residues 1 to 37 (MPMQEPQRRLLGPFNSTRTGAPHLELSANQTGPWCLH). 2 N-linked (GlcNAc...) asparagine glycosylation sites follow: asparagine 15 and asparagine 29. The chain crosses the membrane as a helical span at residues 38–63 (VSIPDGLFLSLGLVSLVENVLVVISI). The Cytoplasmic portion of the chain corresponds to 64–72 (AKNQNLHSP). Residues 73 to 93 (MYYFICCLALSDLLVSVSIVL) traverse the membrane as a helical segment. The Extracellular portion of the chain corresponds to 94–118 (ETTLILVLEAGALATRVTVVQQLDN). Residues 119-140 (VIDVLICASMVSSLCFLGAIAV) form a helical membrane-spanning segment. Residues 141–163 (DRYISIFYALRYHSIVTLPRARW) lie on the Cytoplasmic side of the membrane. A helical transmembrane segment spans residues 164 to 183 (AIVAIWVASISSSTLFVAYY). At 184-191 (NHTAVLLC) the chain is on the extracellular side. A helical membrane pass occupies residues 192 to 211 (LVTFFLATLALMVVLYVHML). At 212 to 240 (ARAHQHAQAIAQLHKRQHLVHQGFRLKGA) the chain is on the cytoplasmic side. The chain crosses the membrane as a helical span at residues 241–266 (ATLTILLGIFFLCWGPFFLYLTLIVL). Residues 267–279 (CPKHPTCGCFFKN) are Extracellular-facing. A helical transmembrane segment spans residues 280-300 (LNLFLALIIFNSIVDPLIYAF). Over 301–317 (RSQELRMTLKEVLLCSW) the chain is Cytoplasmic. The S-palmitoyl cysteine moiety is linked to residue cysteine 315.

This sequence belongs to the G-protein coupled receptor 1 family. As to quaternary structure, interacts with MGRN1, but does not undergo MGRN1-mediated ubiquitination; this interaction competes with GNAS-binding and thus inhibits agonist-induced cAMP production. Interacts with OPN3; the interaction results in a decrease in MC1R-mediated cAMP signaling and ultimately a decrease in melanin production in melanocytes.

The protein resides in the cell membrane. Functionally, receptor for MSH (alpha, beta and gamma) and ACTH. The activity of this receptor is mediated by G proteins which activate adenylate cyclase. Mediates melanogenesis, the production of eumelanin (black/brown) and phaeomelanin (red/yellow), via regulation of cAMP signaling in melanocytes. This Chaetodipus penicillatus (Desert pocket mouse) protein is Melanocyte-stimulating hormone receptor (MC1R).